The chain runs to 92 residues: Small ribosomal subunit protein uS19c (92 aa).

The protein belongs to the universal ribosomal protein uS19 family.

The protein resides in the plastid. The protein localises to the chloroplast. Functionally, protein S19 forms a complex with S13 that binds strongly to the 16S ribosomal RNA. The chain is Small ribosomal subunit protein uS19c from Platanus occidentalis (Sycamore).